Here is a 282-residue protein sequence, read N- to C-terminus: Ribosomal protein L11 methyltransferase (282 aa).

4 residues coordinate S-adenosyl-L-methionine: threonine 133, glycine 154, aspartate 175, and asparagine 216.

This sequence belongs to the methyltransferase superfamily. PrmA family.

It is found in the cytoplasm. It catalyses the reaction L-lysyl-[protein] + 3 S-adenosyl-L-methionine = N(6),N(6),N(6)-trimethyl-L-lysyl-[protein] + 3 S-adenosyl-L-homocysteine + 3 H(+). Its function is as follows. Methylates ribosomal protein L11. The sequence is that of Ribosomal protein L11 methyltransferase from Campylobacter jejuni subsp. doylei (strain ATCC BAA-1458 / RM4099 / 269.97).